The chain runs to 130 residues: Protein MGF 360-1L (130 aa).

The next 3 helical transmembrane spans lie at 4-24 (FLGF…NVNC), 75-95 (IIRH…CVAF), and 109-129 (LLGL…QPFP).

It belongs to the asfivirus MGF 110 family.

The protein localises to the host membrane. Plays a role in virus cell tropism, and may be required for efficient virus replication in macrophages. This is Protein MGF 360-1L from Ornithodoros (relapsing fever ticks).